Reading from the N-terminus, the 324-residue chain is HPr kinase/phosphorylase (324 aa).

Residues His146 and Lys167 contribute to the active site. Gly161 to Ser168 contacts ATP. A Mg(2+)-binding site is contributed by Ser168. Residue Asp185 is the Proton acceptor; for phosphorylation activity. Proton donor; for dephosphorylation activity of the active site. Positions Leu209–Asp218 are important for the catalytic mechanism of both phosphorylation and dephosphorylation. Glu210 is a Mg(2+) binding site. Residue Arg250 is part of the active site. Residues Gln271–Arg276 form an important for the catalytic mechanism of dephosphorylation region.

It belongs to the HPrK/P family. Homohexamer. It depends on Mg(2+) as a cofactor.

The catalysed reaction is [HPr protein]-L-serine + ATP = [HPr protein]-O-phospho-L-serine + ADP + H(+). The enzyme catalyses [HPr protein]-O-phospho-L-serine + phosphate + H(+) = [HPr protein]-L-serine + diphosphate. Its function is as follows. Catalyzes the ATP- as well as the pyrophosphate-dependent phosphorylation of a specific serine residue in HPr, a phosphocarrier protein of the phosphoenolpyruvate-dependent sugar phosphotransferase system (PTS). HprK/P also catalyzes the pyrophosphate-producing, inorganic phosphate-dependent dephosphorylation (phosphorolysis) of seryl-phosphorylated HPr (P-Ser-HPr). This is HPr kinase/phosphorylase from Ralstonia nicotianae (strain ATCC BAA-1114 / GMI1000) (Ralstonia solanacearum).